The sequence spans 176 residues: Parathyroid hormone-related protein (176 aa).

The signal sequence occupies residues 1-25; sequence MMFTKLFQQWSFAVFLLSYSVPSYG. The propeptide occupies 26–37; sequence RSVEGISRRLKR. Residues 58–69 form an important for receptor binding region; that stretch reads RIFLQNLIEGVN. The disordered stretch occupies residues 76 to 157; sequence TSEVSPNPKP…WLNSGMYGSN (82 aa). Polar residues-rich tracts occupy residues 77-91 and 106-116; these read SEVS…NTKN and TQETNKSQTYK. Residues 109 to 130 carry the Nuclear localization signal motif; sequence TNKSQTYKEQPLKVSGKKKKAK. Basic residues predominate over residues 123–133; that stretch reads SGKKKKAKPGK.

Belongs to the parathyroid hormone family.

Its subcellular location is the secreted. It localises to the cytoplasm. It is found in the nucleus. Its function is as follows. Neuroendocrine peptide which is a critical regulator of cellular and organ growth, development, migration, differentiation and survival and of epithelial calcium ion transport. Acts by binding to its receptor, PTH1R, activating G protein-coupled receptor signaling. Regulates endochondral bone development and epithelial-mesenchymal interactions during the formation of the mammary glands and teeth. Required for skeletal homeostasis. Potent inhibitor of osteoclastic bone resorption. The protein is Parathyroid hormone-related protein (PTHLH) of Gallus gallus (Chicken).